The primary structure comprises 375 residues: Queuine tRNA-ribosyltransferase (375 aa).

Aspartate 90 (proton acceptor) is an active-site residue. Substrate is bound by residues 90–94 (DSGGF), aspartate 144, glutamine 190, and glycine 217. The interval 248–254 (GIGTPHY) is RNA binding. Aspartate 267 serves as the catalytic Nucleophile. Residues 272–276 (TRIAR) are RNA binding; important for wobble base 34 recognition. The Zn(2+) site is built by cysteine 305, cysteine 307, cysteine 310, and histidine 336.

The protein belongs to the queuine tRNA-ribosyltransferase family. In terms of assembly, homodimer. Within each dimer, one monomer is responsible for RNA recognition and catalysis, while the other monomer binds to the replacement base PreQ1. Zn(2+) serves as cofactor.

The catalysed reaction is 7-aminomethyl-7-carbaguanine + guanosine(34) in tRNA = 7-aminomethyl-7-carbaguanosine(34) in tRNA + guanine. It functions in the pathway tRNA modification; tRNA-queuosine biosynthesis. Its function is as follows. Catalyzes the base-exchange of a guanine (G) residue with the queuine precursor 7-aminomethyl-7-deazaguanine (PreQ1) at position 34 (anticodon wobble position) in tRNAs with GU(N) anticodons (tRNA-Asp, -Asn, -His and -Tyr). Catalysis occurs through a double-displacement mechanism. The nucleophile active site attacks the C1' of nucleotide 34 to detach the guanine base from the RNA, forming a covalent enzyme-RNA intermediate. The proton acceptor active site deprotonates the incoming PreQ1, allowing a nucleophilic attack on the C1' of the ribose to form the product. After dissociation, two additional enzymatic reactions on the tRNA convert PreQ1 to queuine (Q), resulting in the hypermodified nucleoside queuosine (7-(((4,5-cis-dihydroxy-2-cyclopenten-1-yl)amino)methyl)-7-deazaguanosine). The sequence is that of Queuine tRNA-ribosyltransferase from Borrelia duttonii (strain Ly).